The primary structure comprises 294 residues: Nucleotide-binding protein Adeh_0147 (294 aa).

17–24 lines the ATP pocket; the sequence is GVSGSGKS. 68 to 71 contributes to the GTP binding site; sequence DARE.

The protein belongs to the RapZ-like family.

Displays ATPase and GTPase activities. This chain is Nucleotide-binding protein Adeh_0147, found in Anaeromyxobacter dehalogenans (strain 2CP-C).